Reading from the N-terminus, the 42-residue chain is Serine/threonine-protein phosphatase 5 (42 aa).

Residues 38 to 42 (QLGVM) are required for autoinhibition.

This sequence belongs to the PPP phosphatase family. PP-5 (PP-T) subfamily. In terms of assembly, probably forms a complex composed of chaperones HSP90 and HSP70, co-chaperones STIP1/HOP, CDC37, PPP5C, PTGES3/p23, TSC1 and client protein TSC2. Probably forms a complex composed of chaperones HSP90 and HSP70, co-chaperones CDC37, PPP5C, TSC1 and client protein TSC2, CDK4, AKT, RAF1 and NR3C1; this complex does not contain co-chaperones STIP1/HOP and PTGES3/p23. Part of a complex with HSP90/HSP90AA1 and steroid receptors. Interacts (via TPR repeats) with HSP90AA1 (via TPR repeat-binding motif) or HSPA1A/HSPA1B; the interaction is direct and activates the phosphatase activity. Dissociates from HSPA1A/HSPA1B and HSP90AA1 in response to arachidonic acid. Interacts with CPNE1 (via VWFA domain). Interacts with CDC16, CDC27. Interacts with KLHDC10 (via the 6 Kelch repeats); inhibits the phosphatase activity on MAP3K5. Interacts with ATM and ATR; both interactions are induced by DNA damage and enhance ATM and ATR kinase activity. Interacts with RAD17; reduced by DNA damage. Interacts with nuclear receptors such as NR3C1/GCR and PPARG (activated by agonist); regulates their transactivation activities. Interacts (via TPR repeats) with S100 proteins S100A1, S100A2, S100A6, S100B and S100P; the interactions are calcium-dependent, strongly activate PPP5C phosphatase activity and compete with HSP90AA1 and MAP3K5 interactions. Interacts with SMAD2 and SMAD3 but not with SMAD1; decreases SMAD3 phosphorylation and protein levels. Interacts (via TPR repeats) with CRY1 and CRY2; the interaction with CRY2 down-regulates the phosphatase activity on CSNK1E. Interacts (via TPR repeats) with the active form of RAC1, GNA12 or GNA13; these interactions activate the phosphatase activity and translocate PPP5C to the cell membrane. Interacts with FLCN. It depends on Mg(2+) as a cofactor. Mn(2+) is required as a cofactor. Activated by at least two different proteolytic cleavages producing a 56 kDa and a 50 kDa form.

It is found in the nucleus. The protein localises to the cytoplasm. Its subcellular location is the cell membrane. The catalysed reaction is O-phospho-L-seryl-[protein] + H2O = L-seryl-[protein] + phosphate. It catalyses the reaction O-phospho-L-threonyl-[protein] + H2O = L-threonyl-[protein] + phosphate. With respect to regulation, autoinhibited. In the autoinhibited state, the TPR domain interacts with the catalytic region and prevents substrate access to the catalytic pocket. Allosterically activated by various polyunsaturated fatty acids, free long-chain fatty-acids and long-chain fatty acyl-CoA esters, arachidonic acid being the most effective activator. HSP90A and probably RAC1, GNA12 and GNA13 can also release the autoinhibition by the TPR repeat. Activation by RAC1, GNA12 and GNA13 is synergistic with the one produced by fatty acids binding. Inhibited by okadaic acid. Functionally, serine/threonine-protein phosphatase that dephosphorylates a myriad of proteins involved in different signaling pathways including the kinases CSNK1E, ASK1/MAP3K5, PRKDC and RAF1, the nuclear receptors NR3C1, PPARG, ESR1 and ESR2, SMAD proteins and TAU/MAPT. Implicated in wide ranging cellular processes, including apoptosis, differentiation, DNA damage response, cell survival, regulation of ion channels or circadian rhythms, in response to steroid and thyroid hormones, calcium, fatty acids, TGF-beta as well as oxidative and genotoxic stresses. Participates in the control of DNA damage response mechanisms such as checkpoint activation and DNA damage repair through, for instance, the regulation ATM/ATR-signaling and dephosphorylation of PRKDC and TP53BP1. Inhibits ASK1/MAP3K5-mediated apoptosis induced by oxidative stress. Plays a positive role in adipogenesis, mainly through the dephosphorylation and activation of PPARG transactivation function. Also dephosphorylates and inhibits the anti-adipogenic effect of NR3C1. Regulates the circadian rhythms, through the dephosphorylation and activation of CSNK1E. May modulate TGF-beta signaling pathway by the regulation of SMAD3 phosphorylation and protein expression levels. Dephosphorylates and may play a role in the regulation of TAU/MAPT. Through their dephosphorylation, may play a role in the regulation of ions channels such as KCNH2. Dephosphorylate FNIP1, disrupting interaction with HSP90AA1/Hsp90. The sequence is that of Serine/threonine-protein phosphatase 5 (PPP5C) from Oryctolagus cuniculus (Rabbit).